A 233-amino-acid chain; its full sequence is MSTESMIRDVELAEEALPKKAGGPQGSRRCLCLSLFSFLLVAGATTLFCLLHFGVIGPQKEELLTGLQIMNPLAQTLRSSSQASRDKPVAHVVADPAAQGQLQWEKRFANTLLANGVKLEDNQLVVPTDGLYLIYSQVLFSGQRCPSTPVFLTHTISRLAVSYPNKANLLSAIKSPCQGGTSEEAEAKPWYEPIYLGGVFQLEKDDRLSAEINMPNYLDFAESGQVYFGIIAL.

The Cytoplasmic segment spans residues 1 to 34 (MSTESMIRDVELAEEALPKKAGGPQGSRRCLCLS). The residue at position 2 (serine 2) is a Phosphoserine; by CK1. 2 N6-myristoyl lysine lipidation sites follow: lysine 19 and lysine 20. The helical; Signal-anchor for type II membrane protein transmembrane segment at 35–57 (LFSFLLVAGATTLFCLLHFGVIG) threads the bilayer. Over 58-233 (PQKEELLTGL…GQVYFGIIAL (176 aa)) the chain is Extracellular. O-linked (GalNAc...) serine; in soluble form glycosylation occurs at serine 80. One can recognise a THD domain in the interval 88–233 (PVAHVVADPA…GQVYFGIIAL (146 aa)). A disulfide bridge connects residues cysteine 145 and cysteine 177.

This sequence belongs to the tumor necrosis factor family. Homotrimer. Interacts with SPPL2B. The soluble form derives from the membrane form by proteolytic processing. The membrane-bound form is further proteolytically processed by SPPL2A or SPPL2B through regulated intramembrane proteolysis producing TNF intracellular domains (ICD1 and ICD2) released in the cytosol and TNF C-domain 1 and C-domain 2 secreted into the extracellular space. In terms of processing, the membrane form, but not the soluble form, is phosphorylated on serine residues. Dephosphorylation of the membrane form occurs by binding to soluble TNFRSF1A/TNFR1. Post-translationally, O-glycosylated; glycans contain galactose, N-acetylgalactosamine and N-acetylneuraminic acid. The soluble form is demyristoylated by SIRT6, promoting its secretion.

Its subcellular location is the cell membrane. The protein resides in the membrane. It is found in the secreted. In terms of biological role, cytokine that binds to TNFRSF1A/TNFR1 and TNFRSF1B/TNFBR. It is mainly secreted by macrophages and can induce cell death of certain tumor cell lines. It is potent pyrogen causing fever by direct action or by stimulation of interleukin-1 secretion and is implicated in the induction of cachexia, Under certain conditions it can stimulate cell proliferation and induce cell differentiation. Induces insulin resistance in adipocytes via inhibition of insulin-induced IRS1 tyrosine phosphorylation and insulin-induced glucose uptake. Induces GKAP42 protein degradation in adipocytes which is partially responsible for TNF-induced insulin resistance. Plays a role in angiogenesis by inducing VEGF production synergistically with IL1B and IL6. Promotes osteoclastogenesis and therefore mediates bone resorption. The TNF intracellular domain (ICD) form induces IL12 production in dendritic cells. This chain is Tumor necrosis factor (TNF), found in Lama glama (Llama).